The following is a 133-amino-acid chain: Large ribosomal subunit protein eL14 (133 aa).

This sequence belongs to the eukaryotic ribosomal protein eL14 family.

The chain is Large ribosomal subunit protein eL14 from Pisum sativum (Garden pea).